An 850-amino-acid polypeptide reads, in one-letter code: DEAD-box ATP-dependent RNA helicase 26 (850 aa).

Disordered regions lie at residues 60–82 (TRPE…IRAS) and 106–350 (GKFT…ENDE). A compositionally biased stretch (basic and acidic residues) spans 61–71 (RPERSQPEFAR). T109 is subject to Phosphothreonine. At S110 the chain carries Phosphoserine. Composition is skewed to basic and acidic residues over residues 118 to 140 (EVVR…EGQS) and 284 to 299 (GRND…REPG). Acidic residues-rich tracts occupy residues 315–325 (LEEEDSSDDDE) and 336–350 (LPSE…ENDE). The Q motif motif lies at 382–410 (TRFDQFPLSPLSLKAIKDAGFETMTVVQE). Residues 413 to 596 (LPIILQGKDV…HVALKRDHEF (184 aa)) enclose the Helicase ATP-binding domain. 426-433 (AKTGTGKT) is an ATP binding site. The DEAD box signature appears at 544 to 547 (DEAD). In terms of domain architecture, Helicase C-terminal spans 630–777 (LLKEHIADNV…IDPEAVKRVQ (148 aa)).

The protein belongs to the DEAD box helicase family.

It catalyses the reaction ATP + H2O = ADP + phosphate + H(+). The protein is DEAD-box ATP-dependent RNA helicase 26 (RH26) of Arabidopsis thaliana (Mouse-ear cress).